Reading from the N-terminus, the 148-residue chain is Ribosome-binding factor A (148 aa).

The segment at 120–148 (AKAREGASYAGDADPYRTAEPDADDAPRA) is disordered. Residues 133-148 (DPYRTAEPDADDAPRA) show a composition bias toward basic and acidic residues.

The protein belongs to the RbfA family. In terms of assembly, monomer. Binds 30S ribosomal subunits, but not 50S ribosomal subunits or 70S ribosomes.

Its subcellular location is the cytoplasm. Functionally, one of several proteins that assist in the late maturation steps of the functional core of the 30S ribosomal subunit. Associates with free 30S ribosomal subunits (but not with 30S subunits that are part of 70S ribosomes or polysomes). Required for efficient processing of 16S rRNA. May interact with the 5'-terminal helix region of 16S rRNA. The chain is Ribosome-binding factor A from Micrococcus luteus (strain ATCC 4698 / DSM 20030 / JCM 1464 / CCM 169 / CCUG 5858 / IAM 1056 / NBRC 3333 / NCIMB 9278 / NCTC 2665 / VKM Ac-2230) (Micrococcus lysodeikticus).